Consider the following 135-residue polypeptide: Ribosome-binding factor A (135 aa).

It belongs to the RbfA family. As to quaternary structure, monomer. Binds 30S ribosomal subunits, but not 50S ribosomal subunits or 70S ribosomes.

It is found in the cytoplasm. In terms of biological role, one of several proteins that assist in the late maturation steps of the functional core of the 30S ribosomal subunit. Associates with free 30S ribosomal subunits (but not with 30S subunits that are part of 70S ribosomes or polysomes). Required for efficient processing of 16S rRNA. May interact with the 5'-terminal helix region of 16S rRNA. This is Ribosome-binding factor A from Hahella chejuensis (strain KCTC 2396).